Here is a 109-residue protein sequence, read N- to C-terminus: Cell division protein ZapA (109 aa).

Residues 22-99 (EQQDALNMAA…IEQALLEQGR (78 aa)) are a coiled coil.

This sequence belongs to the ZapA family. Type 1 subfamily. In terms of assembly, homodimer. Interacts with FtsZ.

It localises to the cytoplasm. Functionally, activator of cell division through the inhibition of FtsZ GTPase activity, therefore promoting FtsZ assembly into bundles of protofilaments necessary for the formation of the division Z ring. It is recruited early at mid-cell but it is not essential for cell division. This chain is Cell division protein ZapA, found in Yersinia pseudotuberculosis serotype O:1b (strain IP 31758).